We begin with the raw amino-acid sequence, 499 residues long: Calcium/calmodulin-dependent protein kinase type II subunit delta (499 aa).

Ala-2 is subject to N-acetylalanine. One can recognise a Protein kinase domain in the interval 14 to 272 (YQLFEELGKG…ASEALKHPWI (259 aa)). Residues 20–28 (LGKGAFSVV) and Lys-43 each bind ATP. Asp-136 acts as the Proton acceptor in catalysis. The autoinhibitory domain stretch occupies residues 283–292 (HRQETVDCLK). Thr-287 carries the post-translational modification Phosphothreonine; by autocatalysis. The interval 291–301 (LKKFNARRKLK) is calmodulin-binding. Thr-306 and Thr-307 each carry phosphothreonine; by autocatalysis. At Ser-315 the chain carries Phosphoserine. Lys-318 is subject to N6-acetyllysine. A phosphoserine mark is found at Ser-319 and Ser-330. Thr-331 bears the Phosphothreonine mark. Phosphoserine is present on Ser-333. 2 positions are modified to phosphothreonine: Thr-336 and Thr-337. A phosphoserine mark is found at Ser-404, Ser-490, and Ser-494.

Belongs to the protein kinase superfamily. CAMK Ser/Thr protein kinase family. CaMK subfamily. As to quaternary structure, CAMK2 is composed of 4 different chains: alpha (CAMK2A), beta (CAMK2B), gamma (CAMK2G), and delta (CAMK2D). The different isoforms assemble into homo- or heteromultimeric holoenzymes composed of 12 subunits with two hexameric rings stacked one on top of the other. Interacts with RRAD CACNB2. Autophosphorylation of Thr-287 following activation by Ca(2+)/calmodulin. Phosphorylation of Thr-287 locks the kinase into an activated state.

It is found in the cell membrane. The protein resides in the sarcolemma. The protein localises to the sarcoplasmic reticulum membrane. It carries out the reaction L-seryl-[protein] + ATP = O-phospho-L-seryl-[protein] + ADP + H(+). It catalyses the reaction L-threonyl-[protein] + ATP = O-phospho-L-threonyl-[protein] + ADP + H(+). Activated by Ca(2+)/calmodulin. Binding of calmodulin results in conformational change that relieves intrasteric autoinhibition and allows autophosphorylation of Thr-287 which turns the kinase in a constitutively active form and confers to the kinase a Ca(2+)-independent activity. Its function is as follows. Calcium/calmodulin-dependent protein kinase involved in the regulation of Ca(2+) homeostatis and excitation-contraction coupling (ECC) in heart by targeting ion channels, transporters and accessory proteins involved in Ca(2+) influx into the myocyte, Ca(2+) release from the sarcoplasmic reticulum (SR), SR Ca(2+) uptake and Na(+) and K(+) channel transport. Targets also transcription factors and signaling molecules to regulate heart function. In its activated form, is involved in the pathogenesis of dilated cardiomyopathy and heart failure. Contributes to cardiac decompensation and heart failure by regulating SR Ca(2+) release via direct phosphorylation of RYR2 Ca(2+) channel on 'Ser-2808'. In the nucleus, phosphorylates the MEF2 repressor HDAC4, promoting its nuclear export and binding to 14-3-3 protein, and expression of MEF2 and genes involved in the hypertrophic program. Is essential for left ventricular remodeling responses to myocardial infarction. In pathological myocardial remodeling acts downstream of the beta adrenergic receptor signaling cascade to regulate key proteins involved in ECC. Regulates Ca(2+) influx to myocytes by binding and phosphorylating the L-type Ca(2+) channel subunit beta-2 CACNB2. In addition to Ca(2+) channels, can target and regulate the cardiac sarcolemmal Na(+) channel Nav1.5/SCN5A and the K+ channel Kv4.3/KCND3, which contribute to arrhythmogenesis in heart failure. Phosphorylates phospholamban (PLN/PLB), an endogenous inhibitor of SERCA2A/ATP2A2, contributing to the enhancement of SR Ca(2+) uptake that may be important in frequency-dependent acceleration of relaxation (FDAR) and maintenance of contractile function during acidosis. May participate in the modulation of skeletal muscle function in response to exercise, by regulating SR Ca(2+) transport through phosphorylation of PLN/PLB and triadin, a ryanodine receptor-coupling factor. In response to interferon-gamma (IFN-gamma) stimulation, catalyzes phosphorylation of STAT1, stimulating the JAK-STAT signaling pathway. The protein is Calcium/calmodulin-dependent protein kinase type II subunit delta (CAMK2D) of Sus scrofa (Pig).